The primary structure comprises 317 residues: ATP synthase gamma chain (317 aa).

This sequence belongs to the ATPase gamma chain family. As to quaternary structure, F-type ATPases have 2 components, CF(1) - the catalytic core - and CF(0) - the membrane proton channel. CF(1) has five subunits: alpha(3), beta(3), gamma(1), delta(1), epsilon(1). CF(0) has three main subunits: a, b and c.

It is found in the cellular thylakoid membrane. Functionally, produces ATP from ADP in the presence of a proton gradient across the membrane. The gamma chain is believed to be important in regulating ATPase activity and the flow of protons through the CF(0) complex. The polypeptide is ATP synthase gamma chain (Acaryochloris marina (strain MBIC 11017)).